The primary structure comprises 333 residues: Ornithine carbamoyltransferase (333 aa).

Carbamoyl phosphate is bound by residues 57–60 (STRT), arginine 108, and 135–138 (HPTQ). Residues asparagine 168, aspartate 232, and 236–237 (SM) each bind L-ornithine. Carbamoyl phosphate contacts are provided by residues 274–275 (CL) and arginine 319.

Belongs to the aspartate/ornithine carbamoyltransferase superfamily. OTCase family.

Its subcellular location is the cytoplasm. It catalyses the reaction carbamoyl phosphate + L-ornithine = L-citrulline + phosphate + H(+). The protein operates within amino-acid degradation; L-arginine degradation via ADI pathway; carbamoyl phosphate from L-arginine: step 2/2. Reversibly catalyzes the transfer of the carbamoyl group from carbamoyl phosphate (CP) to the N(epsilon) atom of ornithine (ORN) to produce L-citrulline. The polypeptide is Ornithine carbamoyltransferase (Pediococcus pentosaceus (strain ATCC 25745 / CCUG 21536 / LMG 10740 / 183-1w)).